Here is a 275-residue protein sequence, read N- to C-terminus: Uroporphyrinogen-III synthase (275 aa).

This sequence belongs to the uroporphyrinogen-III synthase family.

The enzyme catalyses hydroxymethylbilane = uroporphyrinogen III + H2O. The protein operates within porphyrin-containing compound metabolism; protoporphyrin-IX biosynthesis; coproporphyrinogen-III from 5-aminolevulinate: step 3/4. Catalyzes cyclization of the linear tetrapyrrole, hydroxymethylbilane, to the macrocyclic uroporphyrinogen III, the fourth step in the heme biosynthetic pathway. This chain is Uroporphyrinogen-III synthase, found in Saccharomyces cerevisiae (strain ATCC 204508 / S288c) (Baker's yeast).